The chain runs to 922 residues: Up-regulator of cell proliferation (922 aa).

The segment at 1 to 20 (MASSGHSDLGEVTSEIKASE) is disordered. S3 is subject to Phosphoserine. Residues 680-920 (RSRLVVLSAL…NIQQLIELVR (241 aa)) form the VLIG-type G domain.

Belongs to the TRAFAC class dynamin-like GTPase superfamily. Very large inducible GTPase (VLIG) family.

The protein localises to the cytoplasm. It is found in the nucleus. May be involved in cell cycle progression through the regulation of cyclin D1 expression. This chain is Up-regulator of cell proliferation (URGCP), found in Bos taurus (Bovine).